The sequence spans 238 residues: Ribosomal RNA small subunit methyltransferase G (238 aa).

S-adenosyl-L-methionine-binding positions include Gly77, Phe82, 128-129, and Arg147; that span reads AE.

This sequence belongs to the methyltransferase superfamily. RNA methyltransferase RsmG family.

The protein resides in the cytoplasm. In terms of biological role, specifically methylates the N7 position of guanine in position 535 of 16S rRNA. In Lysinibacillus sphaericus (strain C3-41), this protein is Ribosomal RNA small subunit methyltransferase G.